Reading from the N-terminus, the 351-residue chain is Cytosolic sulfotransferase 11 (351 aa).

98–103 lines the 3'-phosphoadenylyl sulfate pocket; sequence KGGTTW. His-163 functions as the Proton acceptor in the catalytic mechanism. Residues Arg-184, Ser-192, Tyr-250, and 316-318 each bind 3'-phosphoadenylyl sulfate; that span reads RKG.

It belongs to the sulfotransferase 1 family.

It is found in the cytoplasm. Functionally, sulfotransferase that utilizes 3'-phospho-5'-adenylyl sulfate (PAPS) as sulfonate donor. In Arabidopsis thaliana (Mouse-ear cress), this protein is Cytosolic sulfotransferase 11 (SOT11).